The sequence spans 434 residues: Septin-6 (434 aa).

An N-acetylalanine modification is found at Ala-2. Phosphoserine is present on Ser-27. The 267-residue stretch at 39 to 305 (QGFCFNILCV…ELYRRCKLEE (267 aa)) folds into the Septin-type G domain. Positions 49 to 56 (GETGLGKS) are G1 motif. GTP contacts are provided by residues 49 to 56 (GETGLGKS), Gly-104, 185 to 193 (KADAISKSE), Gly-239, and Arg-254. Residues 101 to 104 (STVG) are G3 motif. The G4 motif stretch occupies residues 184–187 (AKAD). A coiled-coil region spans residues 321–409 (QETYEAKRNE…KTAAELLQSQ (89 aa)). Position 367 is an N6-acetyllysine (Lys-367). Residues 405-434 (LLQSQGSQAGGSQTLKRDKEKKNNPWLCTE) are disordered. The segment covering 407 to 417 (QSQGSQAGGSQ) has biased composition (low complexity). At Ser-416 the chain carries Phosphoserine. Thr-418 carries the phosphothreonine modification.

This sequence belongs to the TRAFAC class TrmE-Era-EngA-EngB-Septin-like GTPase superfamily. Septin GTPase family. In terms of assembly, septins polymerize into heterooligomeric protein complexes that form filaments, and associate with cellular membranes, actin filaments and microtubules. GTPase activity is required for filament formation. Filaments are assembled from asymmetrical heterotrimers, composed of SEPTIN2, SEPTIN6 and SEPTIN7 that associate head-to-head to form a hexameric unit. Within the trimer, directly interacts with SEPTIN2 and SEPTIN7. Also interacts with SEPTIN9 and SEPTIN12. Interaction with SEPTIN12 alters filament structure. Component of a septin core octameric complex consisting of SEPTIN12, SEPTIN7, SEPTIN6 and SEPTIN2 or SEPTIN4 in the order 12-7-6-2-2-6-7-12 or 12-7-6-4-4-6-7-12 and located in the sperm annulus. Interacts with SOCS7. Interacts with HNRNPA1. As to quaternary structure, (Microbial infection) Interacts with HCV NS5B. Widely expressed.

It is found in the cytoplasm. Its subcellular location is the cytoskeleton. The protein resides in the spindle. The protein localises to the chromosome. It localises to the centromere. It is found in the kinetochore. Its subcellular location is the cleavage furrow. The protein resides in the midbody. The protein localises to the cell projection. It localises to the cilium. It is found in the flagellum. Its function is as follows. Filament-forming cytoskeletal GTPase. Required for normal organization of the actin cytoskeleton. Involved in cytokinesis. May play a role in HCV RNA replication. Forms a filamentous structure with SEPTIN12, SEPTIN6, SEPTIN2 and probably SEPTIN4 at the sperm annulus which is required for the structural integrity and motility of the sperm tail during postmeiotic differentiation. This is Septin-6 from Homo sapiens (Human).